A 353-amino-acid polypeptide reads, in one-letter code: Outer membrane protein P5 (353 aa).

The N-terminal stretch at 1–21 is a signal peptide; that stretch reads MKKTAIALVVAGLAAASVAQA. The next 8 beta stranded transmembrane spans lie at 27-37, 58-69, 77-85, 104-115, 120-128, 158-167, 172-179, and 205-213; these read TFYAGVKAGQA, SFTYGVFGGYQI, LAVELGYDD, HGTHLSLKGSYE, LDVYGKAGV, GLFAVGAEYA, LAVRLEYQ, and SINAGISYR. Residues 227–353 form the OmpA-like domain; that stretch reads VVSKTFSLNS…RVEIAVNGTK (127 aa). The cysteines at positions 326 and 338 are disulfide-linked.

It belongs to the outer membrane OOP (TC 1.B.6) superfamily. OmpA family. Monomer and homodimer.

It localises to the cell outer membrane. In terms of biological role, with TolR probably plays a role in maintaining the position of the peptidoglycan cell wall in the periplasm. Acts as a porin with low permeability that allows slow penetration of small solutes; an internal gate slows down solute passage. Reconstitution in planar bilayers with lithium dodecyl sulfate-solublized P5 yields narrow pores (58 pS conductance) with a low probability of opening, whereas n-octyl-bD-glucopyranoside-solubilized P5 forms large pores (1.1 nS conductance) with high open probability. The large pore easily converts to the smaller pore at room temperature; at 42 degrees Celsius the smaller pore converts to the larger one. This is Outer membrane protein P5 from Haemophilus influenzae (strain ATCC 51907 / DSM 11121 / KW20 / Rd).